The following is an 89-amino-acid chain: Large ribosomal subunit protein uL23cz/uL23cy (89 aa).

The protein belongs to the universal ribosomal protein uL23 family. As to quaternary structure, part of the 50S ribosomal subunit.

It localises to the plastid. It is found in the chloroplast. Its function is as follows. Binds to 23S rRNA. In Pelargonium hortorum (Common geranium), this protein is Large ribosomal subunit protein uL23cz/uL23cy (rpl23-A).